Reading from the N-terminus, the 86-residue chain is Large ribosomal subunit protein bL31B (86 aa).

Belongs to the bacterial ribosomal protein bL31 family. Type B subfamily. Part of the 50S ribosomal subunit.

The protein is Large ribosomal subunit protein bL31B of Vibrio parahaemolyticus serotype O3:K6 (strain RIMD 2210633).